The following is a 149-amino-acid chain: HMG1/2-like protein (149 aa).

2 stretches are compositionally biased toward basic and acidic residues: residues 1 to 15 (MKGG…KAET) and 35 to 44 (KGKEPKDPNK). Disordered regions lie at residues 1-52 (MKGG…PSAF) and 112-149 (AYNK…EDDD). Positions 45–114 (PKRPPSAFFV…EYEITLQAYN (70 aa)) form a DNA-binding region, HMG box. A compositionally biased stretch (acidic residues) spans 134 to 149 (NDEDEDEEDEEDEDDD).

The protein belongs to the HMGB family.

Its subcellular location is the nucleus. The protein is HMG1/2-like protein of Vicia faba (Broad bean).